The primary structure comprises 75 residues: Exodeoxyribonuclease 7 small subunit (75 aa).

Belongs to the XseB family. Heterooligomer composed of large and small subunits.

The protein resides in the cytoplasm. It carries out the reaction Exonucleolytic cleavage in either 5'- to 3'- or 3'- to 5'-direction to yield nucleoside 5'-phosphates.. Bidirectionally degrades single-stranded DNA into large acid-insoluble oligonucleotides, which are then degraded further into small acid-soluble oligonucleotides. The polypeptide is Exodeoxyribonuclease 7 small subunit (Thermoanaerobacter sp. (strain X514)).